Consider the following 29-residue polypeptide: Varv peptide D (29 aa).

Residues Gly-1–Asn-29 constitute a cross-link (cyclopeptide (Gly-Asn)). Disulfide bonds link Cys-5–Cys-19, Cys-9–Cys-21, and Cys-14–Cys-26.

In terms of processing, this is a cyclic peptide.

Functionally, probably participates in a plant defense mechanism. This Viola arvensis (European field pansy) protein is Varv peptide D.